The following is a 519-amino-acid chain: cAMP-dependent protein kinase catalytic subunit (519 aa).

The segment at 1-195 (MLPDTGILSP…SQTLQKAENA (195 aa)) is disordered. Polar residues-rich tracts occupy residues 10 to 25 (PFTT…SQTL), 116 to 159 (VTPS…TSPI), and 173 to 191 (TPVN…TLQK). The 256-residue stretch at 208–463 (FNFQRTLGTG…SRSVLEHPWF (256 aa)) folds into the Protein kinase domain. Residues 214–222 (LGTGSFGRV) and Lys237 contribute to the ATP site. The active-site Proton acceptor is Asp331. Positions 464–519 (AEVNWERLLSKQIEPPYVPPVRGGIGDASLFDKYPEETEEYGKDGPDQYGHFFTDF) constitute an AGC-kinase C-terminal domain.

The protein belongs to the protein kinase superfamily. Ser/Thr protein kinase family.

The catalysed reaction is L-seryl-[protein] + ATP = O-phospho-L-seryl-[protein] + ADP + H(+). The enzyme catalyses L-threonyl-[protein] + ATP = O-phospho-L-threonyl-[protein] + ADP + H(+). Its activity is regulated as follows. Activated by cAMP. Functions downstream of adenylate cyclase to regulate trap-development for nematode capture. The sequence is that of cAMP-dependent protein kinase catalytic subunit from Arthrobotrys oligospora (strain ATCC 24927 / CBS 115.81 / DSM 1491) (Nematode-trapping fungus).